We begin with the raw amino-acid sequence, 267 residues long: 1-(5-phosphoribosyl)-5-[(5-phosphoribosylamino)methylideneamino] imidazole-4-carboxamide isomerase (267 aa).

This sequence belongs to the HisA/HisF family.

Its subcellular location is the cytoplasm. The enzyme catalyses 1-(5-phospho-beta-D-ribosyl)-5-[(5-phospho-beta-D-ribosylamino)methylideneamino]imidazole-4-carboxamide = 5-[(5-phospho-1-deoxy-D-ribulos-1-ylimino)methylamino]-1-(5-phospho-beta-D-ribosyl)imidazole-4-carboxamide. It participates in amino-acid biosynthesis; L-histidine biosynthesis; L-histidine from 5-phospho-alpha-D-ribose 1-diphosphate: step 4/9. This is 1-(5-phosphoribosyl)-5-[(5-phosphoribosylamino)methylideneamino] imidazole-4-carboxamide isomerase (HIS6) from Kluyveromyces lactis (strain ATCC 8585 / CBS 2359 / DSM 70799 / NBRC 1267 / NRRL Y-1140 / WM37) (Yeast).